A 1140-amino-acid polypeptide reads, in one-letter code: Protein shank (1140 aa).

6 ANK repeats span residues glutamine 144 to phenylalanine 174, glutamate 178 to tyrosine 207, isoleucine 211 to valine 242, histidine 246 to alanine 275, asparagine 279 to valine 309, and glutamine 312 to valine 341. The disordered stretch occupies residues proline 337–arginine 412. Positions threonine 351–serine 364 are enriched in basic residues. A compositionally biased stretch (low complexity) spans serine 388–arginine 412. Positions isoleucine 436 to aspartate 529 constitute a PDZ domain. 2 stretches are compositionally biased toward polar residues: residues aspartate 640–serine 657 and threonine 687–arginine 704. Disordered stretches follow at residues aspartate 640–alanine 673, threonine 687–alanine 856, glutamine 875–aspartate 902, lysine 961–asparagine 993, and tyrosine 1008–valine 1028. Composition is skewed to low complexity over residues glutamine 761–proline 775 and proline 784–serine 793. 2 stretches are compositionally biased toward pro residues: residues isoleucine 794 to cysteine 806 and valine 823 to glycine 847. Residues glycine 964–proline 974 show a composition bias toward polar residues. Residues serine 977–leucine 988 show a composition bias toward basic and acidic residues. The segment covering serine 1015–valine 1028 has biased composition (low complexity). Residues tryptophan 1078–glutamine 1140 enclose the SAM domain.

Belongs to the SHANK family. As to quaternary structure, interacts (via PDZ domain) with egl-19 (via C-terminus). Expressed in the pharynx, pharyngeal-intestinal valve, intestine, rectal epithelial cells, tail neurons, nerve cord and sperm.

The protein localises to the cell projection. Its subcellular location is the pseudopodium. It localises to the cytoplasmic vesicle. The protein resides in the postsynaptic density. Its function is as follows. Scaffold protein that most likely acts in the postsynaptic density (PSD) of excitatory synapses which orchestrates synapse formation and maintenance at neuromuscular junctions. Associates with and trafficks the L-type calcium channel egl-19 to the cell surface of body wall muscles to ensure the function of the calcium channel and therefore maintain the Ca(2+) current density. The maintenance of Ca(2+) also allows for the downstream regulation of Ca(2+)-induced expression of genes such as gem-4. Plays a role in the regulation of the defecation cycle, and this may be in association with the inositol trisphosphate (IP3) receptor itr-1, which in turn mediates periodic calcium release and muscle contractions. Required for normal fertility and pharyngeal pumping. This chain is Protein shank, found in Caenorhabditis elegans.